The primary structure comprises 1420 residues: DNA-directed RNA polymerase subunit beta' (1420 aa).

Residues Cys71, Cys73, Cys86, and Cys89 each coordinate Zn(2+). Positions 461, 463, and 465 each coordinate Mg(2+). Zn(2+) is bound by residues Cys815, Cys889, Cys896, and Cys899.

It belongs to the RNA polymerase beta' chain family. As to quaternary structure, the RNAP catalytic core consists of 2 alpha, 1 beta, 1 beta' and 1 omega subunit. When a sigma factor is associated with the core the holoenzyme is formed, which can initiate transcription. It depends on Mg(2+) as a cofactor. Zn(2+) is required as a cofactor.

The enzyme catalyses RNA(n) + a ribonucleoside 5'-triphosphate = RNA(n+1) + diphosphate. Its function is as follows. DNA-dependent RNA polymerase catalyzes the transcription of DNA into RNA using the four ribonucleoside triphosphates as substrates. This is DNA-directed RNA polymerase subunit beta' from Haemophilus ducreyi (strain 35000HP / ATCC 700724).